Reading from the N-terminus, the 861-residue chain is MQKSLVIVESPAKAKTINQYLGSEYIVKSSIGHIRDLTKGKLYNKEKNKKFLNENFIEKTNENKILIKQMGIDPYQNWKFEYHILPGKEKIISELKYIANQVKHIYLATDLDREGEAIAWHLKEVIGGDSSKFSRVVFNEITQHSIQKAFKNVGHINMNRVHAQQARRFMDRIVGYMISPLLWKKIARGLSAGRVQSVAVRIIADRESIIKNFVPEEYWKLDVSLISQDKKKINMDVTHYNNKKFRPINENEVSFAVEKIQKSSCIVKNYEEKISYLKAPAPFITSTLQQSASLRLGFSVKKTMFLAQKLYEEGYITYMRTDSNYLSEYAIKKVRKYIKSNYGSNYLPKEPNIYSNEKHSQEAHEAIRPSDIKIKNIDSDHLNSSAKKLYELIWNQFLASQMKSVKYKSITVTVLADMFKLQKSERIVMFQGWNKVLIEEKNVFSQFPILQTGSQLFINKVTPSQKFTKPPPRFSEASLVRELEKKGIGRPSTYSAITSKIQDRGYVKIKKNKFYAEKMGEILTIRLKKSFSNLIDYNFTAHMEKKLDQVAENKVTWRYLLDDFFKKFSEQLEQAKKSPEEGGMELNNIVPTSLNCPICCKKMGIKTAITGVFLSCLGYNNTDNKKRCKKTINLITLNDFNKEQDNQKKISLQLIQKCDICNMYMDSYFINEKLKLHICANNPSCSGYKFEKGVFKSPIYLSKTIQCEKCYNNMKLKIGPFGKFFTCINKICKNTRKILPNGEISDPKLEPIPFPELLCKQSDAWFVLREGISGIFFAANTFPKSRETRSPFVEELVRFQHLLPEKIYYLSSAPVIDNYGNKTIVCFDKKKKTHYIASKKDGKFTGWSAVFIDQKWCVINK.

The Toprim domain occupies 3-141 (KSLVIVESPA…KFSRVVFNEI (139 aa)). 2 residues coordinate Mg(2+): glutamate 9 and aspartate 110. One can recognise a Topo IA-type catalytic domain in the interval 157–572 (NMNRVHAQQA…DFFKKFSEQL (416 aa)). The interval 191 to 196 (SAGRVQ) is interaction with DNA. The active-site O-(5'-phospho-DNA)-tyrosine intermediate is the tyrosine 318. C4-type zinc fingers lie at residues 596-628 (CPICCKKMGIKTAITGVFLSCLGYNNTDNKKRC), 658-685 (CDICNMYMDSYFINEKLKLHICANNPSC), and 707-732 (CEKCYNNMKLKIGPFGKFFTCINKIC).

Belongs to the type IA topoisomerase family. As to quaternary structure, monomer. Mg(2+) is required as a cofactor.

The enzyme catalyses ATP-independent breakage of single-stranded DNA, followed by passage and rejoining.. Its function is as follows. Releases the supercoiling and torsional tension of DNA, which is introduced during the DNA replication and transcription, by transiently cleaving and rejoining one strand of the DNA duplex. Introduces a single-strand break via transesterification at a target site in duplex DNA. The scissile phosphodiester is attacked by the catalytic tyrosine of the enzyme, resulting in the formation of a DNA-(5'-phosphotyrosyl)-enzyme intermediate and the expulsion of a 3'-OH DNA strand. The free DNA strand then undergoes passage around the unbroken strand, thus removing DNA supercoils. Finally, in the religation step, the DNA 3'-OH attacks the covalent intermediate to expel the active-site tyrosine and restore the DNA phosphodiester backbone. This Buchnera aphidicola subsp. Acyrthosiphon pisum (strain APS) (Acyrthosiphon pisum symbiotic bacterium) protein is DNA topoisomerase 1.